Reading from the N-terminus, the 694-residue chain is Methionine--tRNA ligase (694 aa).

A 'HIGH' region motif is present at residues 14–24 (PYANGPIHLGH). Positions 145, 148, 158, and 161 each coordinate Zn(2+). The 'KMSKS' region motif lies at 330–334 (KMSKS). Lys-333 serves as a coordination point for ATP. The interval 558–579 (SLQATAGQPEPHSQVRHAEHQQ) is disordered. One can recognise a tRNA-binding domain in the interval 593 to 694 (DFAKVDLRIA…EGAQPGMKVK (102 aa)).

It belongs to the class-I aminoacyl-tRNA synthetase family. MetG type 1 subfamily. In terms of assembly, homodimer. Zn(2+) is required as a cofactor.

The protein resides in the cytoplasm. It catalyses the reaction tRNA(Met) + L-methionine + ATP = L-methionyl-tRNA(Met) + AMP + diphosphate. Functionally, is required not only for elongation of protein synthesis but also for the initiation of all mRNA translation through initiator tRNA(fMet) aminoacylation. This is Methionine--tRNA ligase from Methylococcus capsulatus (strain ATCC 33009 / NCIMB 11132 / Bath).